Consider the following 147-residue polypeptide: Large ribosomal subunit protein uL13 (147 aa).

The protein belongs to the universal ribosomal protein uL13 family. As to quaternary structure, part of the 50S ribosomal subunit.

Functionally, this protein is one of the early assembly proteins of the 50S ribosomal subunit, although it is not seen to bind rRNA by itself. It is important during the early stages of 50S assembly. The polypeptide is Large ribosomal subunit protein uL13 (Micrococcus luteus (strain ATCC 4698 / DSM 20030 / JCM 1464 / CCM 169 / CCUG 5858 / IAM 1056 / NBRC 3333 / NCIMB 9278 / NCTC 2665 / VKM Ac-2230) (Micrococcus lysodeikticus)).